The chain runs to 158 residues: UPF0758 protein YkfG (158 aa).

The MPN domain maps to 36-158 (AFTSTHAVRE…IYSFAEHGLL (123 aa)). The Zn(2+) site is built by H107, H109, and D120. The JAMM motif signature appears at 107 to 120 (HNHPSGETTPSQAD).

It belongs to the UPF0758 family.

In Escherichia coli (strain K12), this protein is UPF0758 protein YkfG (ykfG).